An 89-amino-acid polypeptide reads, in one-letter code: Small ribosomal subunit protein bS16c (89 aa).

The protein belongs to the bacterial ribosomal protein bS16 family.

It localises to the plastid. Its subcellular location is the chloroplast. This Drimys granadensis protein is Small ribosomal subunit protein bS16c.